Reading from the N-terminus, the 402-residue chain is Zinc finger CCHC domain-containing protein 12 (402 aa).

Residues Met1–Pro20 are disordered. A CCHC-type zinc finger spans residues Ile346 to Asn363. The tract at residues His383–Gln402 is disordered.

This sequence belongs to the ZCCHC12 family. In terms of assembly, interacts with SMAD1 and CREB-binding protein (CBP). Forms a protein-DNA complex through its association with SMAD1. In terms of tissue distribution, in embryonic brains expression is restricted to the ventral region of the forebrain, including the septum, amygdala, caudal putamen, and in the basal-forebrain cholinergic neurons. In adults, expressed in the brain, and at low levels in the testis.

In terms of biological role, transcriptional coactivator in the bone morphogenetic protein (BMP)-signaling pathway. It positively modulates BMP signaling by interacting with SMAD1 and associating with CBP in the transcription complex. It contributes to the BMP-induced enhancement of cholinergic-neuron-specific gene expression. The protein is Zinc finger CCHC domain-containing protein 12 (Zcchc12) of Mus musculus (Mouse).